The sequence spans 77 residues: Translational regulator CsrA (77 aa).

The protein belongs to the CsrA/RsmA family. As to quaternary structure, homodimer; the beta-strands of each monomer intercalate to form a hydrophobic core, while the alpha-helices form wings that extend away from the core.

The protein localises to the cytoplasm. Functionally, a translational regulator that binds mRNA to regulate translation initiation and/or mRNA stability. Usually binds in the 5'-UTR at or near the Shine-Dalgarno sequence preventing ribosome-binding, thus repressing translation. Its main target seems to be the major flagellin gene, while its function is anatagonized by FliW. The sequence is that of Translational regulator CsrA from Desulfitobacterium hafniense (strain DSM 10664 / DCB-2).